The sequence spans 270 residues: Gap junction beta-3 protein (270 aa).

Residues 1–20 (MDWKKLQDLLSGVNQYSTAF) lie on the Cytoplasmic side of the membrane. The chain crosses the membrane as a helical span at residues 21–40 (GRIWLSVVFVFRVLVYVVAA). Over 41 to 75 (ERVWGDEQKDFDCNTRQPGCTNVCYDNFFPISNIR) the chain is Extracellular. A helical membrane pass occupies residues 76–98 (LWALQLIFVTCPSMLVILHVAYR). Residues 99–126 (EERERKHRQKHGEHCAKLYSHPGKKHGG) are Cytoplasmic-facing. A helical membrane pass occupies residues 127–149 (LWWTYLFSLIFKLIIELVFLYVL). The Extracellular portion of the chain corresponds to 150 to 188 (HTLWHGFTMPRLVQCASVVPCPNTVDCYIARPTEKKVFT). Residues 189–211 (YFMVGASAVCIILTICEICYLIF) form a helical membrane-spanning segment. Over 212-270 (HRIMRGLSKDKSTKSISSPKSSSRASTCRCHHKLLESGDLEAVPADDKLQASAPSLTPI) the chain is Cytoplasmic.

This sequence belongs to the connexin family. Beta-type (group I) subfamily. A connexon is composed of a hexamer of connexins. Interacts with CNST.

It is found in the cell membrane. It localises to the cell junction. The protein resides in the gap junction. Its function is as follows. One gap junction consists of a cluster of closely packed pairs of transmembrane channels, the connexons, through which materials of low MW diffuse from one cell to a neighboring cell. This is Gap junction beta-3 protein (Gjb3) from Rattus norvegicus (Rat).